Here is a 560-residue protein sequence, read N- to C-terminus: Eukaryotic translation initiation factor 3 subunit D-1 (560 aa).

The segment at 98–166 (VQKPPHQRGR…RGPPPKMRES (69 aa)) is disordered. Residues 100–121 (KPPHQRGRFRNMRNSRSGRGRN) show a composition bias toward basic residues. The residue at position 128 (Thr-128) is a Phosphothreonine. Basic residues predominate over residues 147-156 (GRGMGKKFGH). Positions 291–305 (EFDLLTVNESSVEPP) are RNA gate.

Belongs to the eIF-3 subunit D family. Component of the eukaryotic translation initiation factor 3 (eIF-3) complex. The eIF-3 complex interacts with pix.

It is found in the cytoplasm. Its function is as follows. mRNA cap-binding component of the eukaryotic translation initiation factor 3 (eIF-3) complex, which is involved in protein synthesis of a specialized repertoire of mRNAs and, together with other initiation factors, stimulates binding of mRNA and methionyl-tRNAi to the 40S ribosome. The eIF-3 complex specifically targets and initiates translation of a subset of mRNAs involved in cell proliferation. In the eIF-3 complex, eif3d specifically recognizes and binds the 7-methylguanosine cap of a subset of mRNAs. The sequence is that of Eukaryotic translation initiation factor 3 subunit D-1 from Drosophila melanogaster (Fruit fly).